The primary structure comprises 211 residues: 3,4-dihydroxy-2-butanone 4-phosphate synthase (211 aa).

D-ribulose 5-phosphate contacts are provided by residues 37–38 (RE), Asp-42, 150–154 (RIGHT), and Glu-174. Glu-38 is a Mg(2+) binding site. His-153 contacts Mg(2+).

The protein belongs to the DHBP synthase family. Homodimer. The cofactor is Mg(2+). Requires Mn(2+) as cofactor.

The catalysed reaction is D-ribulose 5-phosphate = (2S)-2-hydroxy-3-oxobutyl phosphate + formate + H(+). It functions in the pathway cofactor biosynthesis; riboflavin biosynthesis; 2-hydroxy-3-oxobutyl phosphate from D-ribulose 5-phosphate: step 1/1. In terms of biological role, catalyzes the conversion of D-ribulose 5-phosphate to formate and 3,4-dihydroxy-2-butanone 4-phosphate. The polypeptide is 3,4-dihydroxy-2-butanone 4-phosphate synthase (Buchnera aphidicola subsp. Baizongia pistaciae (strain Bp)).